The chain runs to 153 residues: Histone H2B.3 (153 aa).

2 stretches are compositionally biased toward basic and acidic residues: residues 1–28 (MAPK…EKAP) and 36–53 (EKRL…EGRK). Positions 1–61 (MAPKAEKKPA…RKAGRKKAKK (61 aa)) are disordered. Residues K7 and K37 each carry the N6-acetyllysine modification. K149 participates in a covalent cross-link: Glycyl lysine isopeptide (Lys-Gly) (interchain with G-Cter in ubiquitin).

It belongs to the histone H2B family. In terms of assembly, the nucleosome is a histone octamer containing two molecules each of H2A, H2B, H3 and H4 assembled in one H3-H4 heterotetramer and two H2A-H2B heterodimers. The octamer wraps approximately 147 bp of DNA. In terms of processing, can be acetylated to form H2BK6ac and H2BK33ac. Monoubiquitinated by BRE1 to form H2BK143ub1 and deubiquitinated by UBP26. Required for heterochromatic histone H3 di- and trimethylation at H3K4me. May give a specific tag for epigenetic transcriptional activation.

It localises to the nucleus. The protein localises to the chromosome. Core component of nucleosome. Nucleosomes wrap and compact DNA into chromatin, limiting DNA accessibility to the cellular machineries which require DNA as a template. Histones thereby play a central role in transcription regulation, DNA repair, DNA replication and chromosomal stability. DNA accessibility is regulated via a complex set of post-translational modifications of histones, also called histone code, and nucleosome remodeling. This is Histone H2B.3 (H2B.3) from Oryza sativa subsp. japonica (Rice).